Reading from the N-terminus, the 337-residue chain is HTH-type transcriptional repressor PurR (337 aa).

One can recognise an HTH lacI-type domain in the interval 2–56 (ATIKDVAKLAAVSTTTVSHVINKTRFVAEATQKRVWEAVEELNYAPSAVARSLKC). A DNA-binding region (H-T-H motif) is located at residues 4–23 (IKDVAKLAAVSTTTVSHVIN). Residues 48-56 (SAVARSLKC) mediate DNA binding. Hypoxanthine contacts are provided by Phe73, Lys189, Thr191, Phe220, and Asp276.

Homodimer.

It functions in the pathway purine metabolism; purine nucleotide biosynthesis [regulation]. In terms of biological role, is the main repressor of the genes involved in the de novo synthesis of purine nucleotides, regulating purB, purC, purEK, purF, purHD, purL, purMN and guaBA expression. PurR is allosterically activated to bind its cognate DNA by binding the purine corepressors, hypoxanthine or guanine, thereby effecting transcription repression. In Aliivibrio fischeri (strain ATCC 700601 / ES114) (Vibrio fischeri), this protein is HTH-type transcriptional repressor PurR.